The following is a 455-amino-acid chain: Bifunctional protein GlmU (455 aa).

Positions 1–226 (MGLSVVILAA…EFEILGVNDR (226 aa)) are pyrophosphorylase. Residues 8–11 (LAAG), K22, Q73, 78–79 (GT), 99–101 (YGD), G136, E151, N166, and N224 contribute to the UDP-N-acetyl-alpha-D-glucosamine site. D101 serves as a coordination point for Mg(2+). N224 contributes to the Mg(2+) binding site. The interval 227–247 (TQLASLERVWQRNVAEKIMAK) is linker. The segment at 248 to 455 (GVSIADPNRF…WQRSVKKTDK (208 aa)) is N-acetyltransferase. R330 and K348 together coordinate UDP-N-acetyl-alpha-D-glucosamine. Catalysis depends on H360, which acts as the Proton acceptor. UDP-N-acetyl-alpha-D-glucosamine contacts are provided by Y363 and N374. Acetyl-CoA-binding positions include A377, 383 to 384 (NY), S402, A420, and R437.

It in the N-terminal section; belongs to the N-acetylglucosamine-1-phosphate uridyltransferase family. This sequence in the C-terminal section; belongs to the transferase hexapeptide repeat family. As to quaternary structure, homotrimer. Mg(2+) is required as a cofactor.

It localises to the cytoplasm. It carries out the reaction alpha-D-glucosamine 1-phosphate + acetyl-CoA = N-acetyl-alpha-D-glucosamine 1-phosphate + CoA + H(+). The enzyme catalyses N-acetyl-alpha-D-glucosamine 1-phosphate + UTP + H(+) = UDP-N-acetyl-alpha-D-glucosamine + diphosphate. Its pathway is nucleotide-sugar biosynthesis; UDP-N-acetyl-alpha-D-glucosamine biosynthesis; N-acetyl-alpha-D-glucosamine 1-phosphate from alpha-D-glucosamine 6-phosphate (route II): step 2/2. The protein operates within nucleotide-sugar biosynthesis; UDP-N-acetyl-alpha-D-glucosamine biosynthesis; UDP-N-acetyl-alpha-D-glucosamine from N-acetyl-alpha-D-glucosamine 1-phosphate: step 1/1. It functions in the pathway bacterial outer membrane biogenesis; LPS lipid A biosynthesis. Its function is as follows. Catalyzes the last two sequential reactions in the de novo biosynthetic pathway for UDP-N-acetylglucosamine (UDP-GlcNAc). The C-terminal domain catalyzes the transfer of acetyl group from acetyl coenzyme A to glucosamine-1-phosphate (GlcN-1-P) to produce N-acetylglucosamine-1-phosphate (GlcNAc-1-P), which is converted into UDP-GlcNAc by the transfer of uridine 5-monophosphate (from uridine 5-triphosphate), a reaction catalyzed by the N-terminal domain. The polypeptide is Bifunctional protein GlmU (Francisella tularensis subsp. tularensis (strain FSC 198)).